Consider the following 419-residue polypeptide: CinA-like protein (419 aa).

Belongs to the CinA family.

This chain is CinA-like protein, found in Parasynechococcus marenigrum (strain WH8102).